The chain runs to 432 residues: MEVTVIGAGLAGSEAAWQLAKRGIRVKLYEMRPVKQTPAHHTDKFAELVCSNSLRANTLTNAVGVLKEEMRRLDSVIMKAADSCSVPAGGALAVDRHEFAAKVTQMVTNHPNVTVVREEVTSIPTGPTIIATGPLTSQPLSEQLQALTGEEYLYFYDAAAPIVEKESIDMEKVYIKSRYDKGEAAYINCPMTEEEFERFYDALISAETVPLKEFEKEIYFEGCMPIEVMARRGKKTLLFGPMKPVGLEDPRTGKRPFAVVQLRQDDAAGTLYNIVGFQTHLKWGAQKEVIRFIPGLEQAEIVRYGVMHRNTFINSPKLLKPTYQYKEREDLFFAGQMTGVEGYVESAASGLVAGINAAHYVLGKELVVFPQETAIGSMAHYITSANPKHFQPMNANFGLFAPLDEMIKDKKKKNERYAERALETIQNFLKKL.

7-12 (GAGLAG) provides a ligand contact to FAD.

The protein belongs to the MnmG family. TrmFO subfamily. Requires FAD as cofactor.

The protein resides in the cytoplasm. It carries out the reaction uridine(54) in tRNA + (6R)-5,10-methylene-5,6,7,8-tetrahydrofolate + NADH + H(+) = 5-methyluridine(54) in tRNA + (6S)-5,6,7,8-tetrahydrofolate + NAD(+). The enzyme catalyses uridine(54) in tRNA + (6R)-5,10-methylene-5,6,7,8-tetrahydrofolate + NADPH + H(+) = 5-methyluridine(54) in tRNA + (6S)-5,6,7,8-tetrahydrofolate + NADP(+). Catalyzes the folate-dependent formation of 5-methyl-uridine at position 54 (M-5-U54) in all tRNAs. The protein is Methylenetetrahydrofolate--tRNA-(uracil-5-)-methyltransferase TrmFO of Anoxybacillus flavithermus (strain DSM 21510 / WK1).